The primary structure comprises 242 residues: Protein HTATIP2 (242 aa).

The residue at position 2 (alanine 2) is an N-acetylalanine. The interval alanine 2–glycine 25 is required for interaction with elongation factor EEF1A1. NADPH-binding residues include serine 27, glycine 28, glutamate 29, threonine 30, arginine 52, arginine 53, leucine 92, glycine 93, tyrosine 143, lysine 147, leucine 170, and arginine 178. Tyrosine 143 acts as the Proton acceptor in catalysis. Lysine 147 is an active-site residue.

In terms of assembly, monomer. Forms homodimers during oxidative stress. Interacts (via N-terminus) with elongation factor EEF1A1 (via middle-region); the interaction is direct and competes with EEF1A1 binding to guanyl-nucleotide exchange factor EEF1B2, thereby inhibiting GDP for GTP exchange and reactivation of EEF1A1. Interacts with nuclear transport receptors XPO4, IPO5/RANBP5, IPO7, IPO9 and KPNB1 as well as GCN1L1/GCN1 and LRPPRC probably through their HEAT repeats. Binds NCOA5/CIA.

It localises to the cytoplasm. Functionally, represses translation by preventing reactivation of elongation factor eEF1A. May also inhibit nuclear import by competing with nuclear import substrates for binding to a subset of nuclear transport receptors. Has additionally been proposed to act as a redox sensor involved in cellular oxidative stress surveillance. The sequence is that of Protein HTATIP2 (HTATIP2) from Pongo pygmaeus (Bornean orangutan).